Reading from the N-terminus, the 245-residue chain is MAQQVSARQPRYKRILLKLSGEALMGSEEFGIDPKVLDRMALEIGQLVGIGVQVGLVIGGGNLFRGAALSAAGMDRVTGDHMGMLATVMNGLAMRDALERSNIPALVMSAISMVGVTDHYDRRKAMRHLNGGEVVIFSAGTGNPFFTTDSAACLRAIEIDADVVLKATKVDGVYTADPFKDPNAEKFERLTYDEVLDRKLGVMDLTAICLCRDQNMPLRVFNMNKPGALLNIVVGGAEGTLIEEG.

Residue 18 to 21 participates in ATP binding; the sequence is KLSG. Position 60 (Gly60) interacts with UMP. Gly61 and Arg65 together coordinate ATP. UMP contacts are provided by residues Asp80 and 141–148; that span reads TGNPFFTT. ATP-binding residues include Thr168, Tyr174, and Asp177.

It belongs to the UMP kinase family. As to quaternary structure, homohexamer.

It localises to the cytoplasm. The catalysed reaction is UMP + ATP = UDP + ADP. Its pathway is pyrimidine metabolism; CTP biosynthesis via de novo pathway; UDP from UMP (UMPK route): step 1/1. With respect to regulation, inhibited by UTP. Functionally, catalyzes the reversible phosphorylation of UMP to UDP. In Pseudomonas paraeruginosa (strain DSM 24068 / PA7) (Pseudomonas aeruginosa (strain PA7)), this protein is Uridylate kinase.